A 495-amino-acid chain; its full sequence is Surface E' protein (495 aa).

The chain crosses the membrane as a helical span at residues 224-235 (GTLIGLVALIGV).

It is found in the cell membrane. This chain is Surface E' protein (cbbE'), found in Coxiella burnetii.